A 430-amino-acid polypeptide reads, in one-letter code: Adenylosuccinate synthetase (430 aa).

Residues 13 to 19 and 41 to 43 each bind GTP; these read GDEGKGK and GHT. Catalysis depends on aspartate 14, which acts as the Proton acceptor. 2 residues coordinate Mg(2+): aspartate 14 and glycine 41. Residues 14–17, 39–42, threonine 130, arginine 144, glutamine 225, threonine 240, and arginine 304 contribute to the IMP site; these read DEGK and NAGH. Histidine 42 acts as the Proton donor in catalysis. 300-306 contacts substrate; the sequence is ATTGRAR. Residues arginine 306, 332–334, and 414–416 contribute to the GTP site; these read KLD and STG.

The protein belongs to the adenylosuccinate synthetase family. As to quaternary structure, homodimer. The cofactor is Mg(2+).

Its subcellular location is the cytoplasm. It carries out the reaction IMP + L-aspartate + GTP = N(6)-(1,2-dicarboxyethyl)-AMP + GDP + phosphate + 2 H(+). It participates in purine metabolism; AMP biosynthesis via de novo pathway; AMP from IMP: step 1/2. Its function is as follows. Plays an important role in the de novo pathway of purine nucleotide biosynthesis. Catalyzes the first committed step in the biosynthesis of AMP from IMP. The chain is Adenylosuccinate synthetase from Pseudomonas fluorescens (strain ATCC BAA-477 / NRRL B-23932 / Pf-5).